A 199-amino-acid polypeptide reads, in one-letter code: NAD(P)H dehydrogenase (quinone) (199 aa).

One can recognise a Flavodoxin-like domain in the interval 4 to 190; it reads MLVLYYSAYG…DDARFQGRRV (187 aa). FMN-binding positions include 10–15 and 78–80; these read SAYGHM and TRY. Y12 provides a ligand contact to NAD(+). Residue W98 participates in substrate binding. Residues 113–119 and H134 contribute to the FMN site; that span reads STATQHG. The tract at residues 158 to 181 is disordered; sequence GAPYGMTTTADGDGSRQPSAQELD. Over residues 163–177 the composition is skewed to polar residues; sequence MTTTADGDGSRQPSA.

Belongs to the WrbA family. FMN is required as a cofactor.

The enzyme catalyses a quinone + NADH + H(+) = a quinol + NAD(+). It catalyses the reaction a quinone + NADPH + H(+) = a quinol + NADP(+). The chain is NAD(P)H dehydrogenase (quinone) from Brucella ovis (strain ATCC 25840 / 63/290 / NCTC 10512).